The sequence spans 89 residues: Small ribosomal subunit protein uS15 (89 aa).

It belongs to the universal ribosomal protein uS15 family. Part of the 30S ribosomal subunit. Forms a bridge to the 50S subunit in the 70S ribosome, contacting the 23S rRNA.

In terms of biological role, one of the primary rRNA binding proteins, it binds directly to 16S rRNA where it helps nucleate assembly of the platform of the 30S subunit by binding and bridging several RNA helices of the 16S rRNA. Its function is as follows. Forms an intersubunit bridge (bridge B4) with the 23S rRNA of the 50S subunit in the ribosome. This Geobacillus kaustophilus (strain HTA426) protein is Small ribosomal subunit protein uS15.